A 342-amino-acid polypeptide reads, in one-letter code: N-acetyl-gamma-glutamyl-phosphate reductase (342 aa).

The active site involves Cys-149.

This sequence belongs to the NAGSA dehydrogenase family. Type 1 subfamily.

It is found in the cytoplasm. It carries out the reaction N-acetyl-L-glutamate 5-semialdehyde + phosphate + NADP(+) = N-acetyl-L-glutamyl 5-phosphate + NADPH + H(+). The protein operates within amino-acid biosynthesis; L-arginine biosynthesis; N(2)-acetyl-L-ornithine from L-glutamate: step 3/4. In terms of biological role, catalyzes the NADPH-dependent reduction of N-acetyl-5-glutamyl phosphate to yield N-acetyl-L-glutamate 5-semialdehyde. This is N-acetyl-gamma-glutamyl-phosphate reductase from Cereibacter sphaeroides (strain ATCC 17029 / ATH 2.4.9) (Rhodobacter sphaeroides).